The following is a 222-amino-acid chain: Exosome complex component Rrp4 (222 aa).

Positions 63-131 (NDSVIGKVVD…EVKKVKLGLH (69 aa)) constitute an S1 motif domain. The 62-residue stretch at 139–200 (EGGTLAYITP…EIVKRALEMI (62 aa)) folds into the KH domain.

This sequence belongs to the RRP4 family. In terms of assembly, component of the archaeal exosome complex. Forms a trimer of Rrp4 and/or Csl4 subunits. The trimer associates with a hexameric ring-like arrangement composed of 3 Rrp41-Rrp42 heterodimers.

The protein localises to the cytoplasm. In terms of biological role, non-catalytic component of the exosome, which is a complex involved in RNA degradation. Increases the RNA binding and the efficiency of RNA degradation. Confers strong poly(A) specificity to the exosome. The polypeptide is Exosome complex component Rrp4 (Methanothermus fervidus (strain ATCC 43054 / DSM 2088 / JCM 10308 / V24 S)).